Reading from the N-terminus, the 162-residue chain is Phosphopantetheine adenylyltransferase (162 aa).

Threonine 9 serves as a coordination point for substrate. ATP is bound by residues 9 to 10 and histidine 17; that span reads TF. The substrate site is built by lysine 41, leucine 73, and arginine 87. Residues 88–90, glutamate 98, and 123–129 each bind ATP; these read GLR and LSYISSS.

Belongs to the bacterial CoaD family. As to quaternary structure, homohexamer. Mg(2+) serves as cofactor.

Its subcellular location is the cytoplasm. The enzyme catalyses (R)-4'-phosphopantetheine + ATP + H(+) = 3'-dephospho-CoA + diphosphate. The protein operates within cofactor biosynthesis; coenzyme A biosynthesis; CoA from (R)-pantothenate: step 4/5. Functionally, reversibly transfers an adenylyl group from ATP to 4'-phosphopantetheine, yielding dephospho-CoA (dPCoA) and pyrophosphate. This Teredinibacter turnerae (strain ATCC 39867 / T7901) protein is Phosphopantetheine adenylyltransferase.